The sequence spans 397 residues: 2-oxoglutarate and iron-dependent oxygenase domain-containing protein ICU11 (397 aa).

The segment at 1 to 56 (MCNQTPLRSMALDSSGKQPEQQQQQQPRASSGNGEARLKLRRTPNEEHEPENYEDL) is disordered. Residues 18–27 (QPEQQQQQQP) show a composition bias toward low complexity. Positions 238–339 (SLDSHHGYIV…RANLILWCRS (102 aa)) constitute a Fe2OG dioxygenase domain. Fe cation is bound by residues His260, Asp262, and His320. A 2-oxoglutarate-binding site is contributed by Arg330.

Requires Fe(2+) as cofactor. It depends on L-ascorbate as a cofactor. Expressed in roots, cotyledons, rosette leaves, cauline leaves and inflorescences.

The protein resides in the nucleus. It localises to the nucleoplasm. Participates in the epigenetic repression of flowering genes in association with CP2. Functions in the repression of several members of the MADS-box transcription factors family, including SEP3, during vegetative development via histone modification. The polypeptide is 2-oxoglutarate and iron-dependent oxygenase domain-containing protein ICU11 (Arabidopsis thaliana (Mouse-ear cress)).